The chain runs to 113 residues: Molt-inhibiting hormone (113 aa).

The first 35 residues, 1 to 35, serve as a signal peptide directing secretion; the sequence is MMSRTESRYSSQRTWLLSMVVLAALWSISVQRATA. Intrachain disulfides connect Cys-42–Cys-79, Cys-59–Cys-75, and Cys-62–Cys-88.

It belongs to the arthropod CHH/MIH/GIH/VIH hormone family.

The protein localises to the secreted. Its function is as follows. Inhibits Y-organs where molting hormone (ecdysteroid) is secreted. A molting cycle is initiated when MIH secretion diminishes or stops. In Metacarcinus magister (Dungeness crab), this protein is Molt-inhibiting hormone.